A 424-amino-acid polypeptide reads, in one-letter code: Argininosuccinate synthase (424 aa).

ATP contacts are provided by residues 9-17 (AYSGGLDTS) and A35. Y86 and S91 together coordinate L-citrulline. Position 114-122 (114-122 (SHGATGKGN)) interacts with ATP. L-aspartate contacts are provided by T118, N122, and D123. N122 serves as a coordination point for L-citrulline. 5 residues coordinate L-citrulline: R126, S179, S188, E269, and Y281.

This sequence belongs to the argininosuccinate synthase family. In terms of assembly, homotetramer.

The enzyme catalyses L-citrulline + L-aspartate + ATP = 2-(N(omega)-L-arginino)succinate + AMP + diphosphate + H(+). It participates in amino-acid biosynthesis; L-arginine biosynthesis; L-arginine from L-ornithine and carbamoyl phosphate: step 2/3. The protein operates within nitrogen metabolism; urea cycle; (N(omega)-L-arginino)succinate from L-aspartate and L-citrulline: step 1/1. In Anopheles gambiae (African malaria mosquito), this protein is Argininosuccinate synthase.